The primary structure comprises 217 residues: Cytokinin riboside 5'-monophosphate phosphoribohydrolase LOG7 (217 aa).

Substrate-binding positions include Glu-79, 97–98, 114–120, and Thr-126; these read RK and GYGTLEE.

Belongs to the LOG family. As to expression, expressed in roots and shoots. Detected in the epidermis of the root elongation zone, cotyledon and leaves, in trichomes and pollen.

The protein localises to the cytoplasm. It localises to the nucleus. The enzyme catalyses N(6)-(dimethylallyl)adenosine 5'-phosphate + H2O = N(6)-dimethylallyladenine + D-ribose 5-phosphate. The catalysed reaction is 9-ribosyl-trans-zeatin 5'-phosphate + H2O = trans-zeatin + D-ribose 5-phosphate. Its function is as follows. Cytokinin-activating enzyme working in the direct activation pathway. Phosphoribohydrolase that converts inactive cytokinin nucleotides to the biologically active free-base forms. This is Cytokinin riboside 5'-monophosphate phosphoribohydrolase LOG7 (LOG7) from Arabidopsis thaliana (Mouse-ear cress).